The primary structure comprises 289 residues: UPF0761 membrane protein ESA_04062 (289 aa).

Helical transmembrane passes span 44 to 64, 104 to 124, 140 to 160, 183 to 203, 215 to 235, and 244 to 264; these read LLSL…FPMF, VGAL…DSAL, FAVY…SLVI, IFPL…VPTT, LVAA…ITMF, and VLAV…IVLL.

The protein belongs to the UPF0761 family.

The protein localises to the cell inner membrane. The protein is UPF0761 membrane protein ESA_04062 of Cronobacter sakazakii (strain ATCC BAA-894) (Enterobacter sakazakii).